Reading from the N-terminus, the 607-residue chain is DNA mismatch repair protein MutL (607 aa).

The tract at residues 374–411 (RTEAGNEHVPSANRIQPPDPSIDMPDEPVPEQTDEPVA) is disordered. Over residues 397–407 (MPDEPVPEQTD) the composition is skewed to acidic residues.

This sequence belongs to the DNA mismatch repair MutL/HexB family.

This protein is involved in the repair of mismatches in DNA. It is required for dam-dependent methyl-directed DNA mismatch repair. May act as a 'molecular matchmaker', a protein that promotes the formation of a stable complex between two or more DNA-binding proteins in an ATP-dependent manner without itself being part of a final effector complex. The protein is DNA mismatch repair protein MutL of Exiguobacterium sibiricum (strain DSM 17290 / CCUG 55495 / CIP 109462 / JCM 13490 / 255-15).